The sequence spans 461 residues: Putative forkhead-related transcription factor fkh-5 (461 aa).

The fork-head DNA-binding region spans 171 to 262; that stretch reads QRPQLSYQLL…VEKEMIDVKT (92 aa).

The protein localises to the nucleus. Functionally, transcription factor. Binds to DNA sequence motif 5'-CTGTTTCA-3'. Regulates expression of a class of small RNAs, known as 21U-RNAs, perhaps acting redundantly with fkh-4 and fkh-3. The sequence is that of Putative forkhead-related transcription factor fkh-5 (fkh-5) from Caenorhabditis elegans.